Reading from the N-terminus, the 290-residue chain is 4-diphosphocytidyl-2-C-methyl-D-erythritol kinase (290 aa).

Residue K13 is part of the active site. Residue 96 to 106 participates in ATP binding; it reads PMGGGIGGGSS. D138 is a catalytic residue.

The protein belongs to the GHMP kinase family. IspE subfamily.

It carries out the reaction 4-CDP-2-C-methyl-D-erythritol + ATP = 4-CDP-2-C-methyl-D-erythritol 2-phosphate + ADP + H(+). Its pathway is isoprenoid biosynthesis; isopentenyl diphosphate biosynthesis via DXP pathway; isopentenyl diphosphate from 1-deoxy-D-xylulose 5-phosphate: step 3/6. Its function is as follows. Catalyzes the phosphorylation of the position 2 hydroxy group of 4-diphosphocytidyl-2C-methyl-D-erythritol. The protein is 4-diphosphocytidyl-2-C-methyl-D-erythritol kinase of Vibrio campbellii (strain ATCC BAA-1116).